The sequence spans 162 residues: NADH-quinone oxidoreductase subunit I (162 aa).

2 4Fe-4S ferredoxin-type domains span residues 53–83 and 93–122; these read LRRY…IDSE and TRYD…ETRI. [4Fe-4S] cluster contacts are provided by C63, C66, C69, C73, C102, C105, C108, and C112.

Belongs to the complex I 23 kDa subunit family. NDH-1 is composed of 14 different subunits. Subunits NuoA, H, J, K, L, M, N constitute the membrane sector of the complex. It depends on [4Fe-4S] cluster as a cofactor.

Its subcellular location is the cell inner membrane. It carries out the reaction a quinone + NADH + 5 H(+)(in) = a quinol + NAD(+) + 4 H(+)(out). Its function is as follows. NDH-1 shuttles electrons from NADH, via FMN and iron-sulfur (Fe-S) centers, to quinones in the respiratory chain. The immediate electron acceptor for the enzyme in this species is believed to be ubiquinone. Couples the redox reaction to proton translocation (for every two electrons transferred, four hydrogen ions are translocated across the cytoplasmic membrane), and thus conserves the redox energy in a proton gradient. This is NADH-quinone oxidoreductase subunit I from Thiobacillus denitrificans (strain ATCC 25259 / T1).